The chain runs to 312 residues: Olfactory receptor-like protein COR5 (312 aa).

The Extracellular segment spans residues 1-26; it reads MALGNCTTPTTFILSGLTDNPRLQMP. Residue Asn5 is glycosylated (N-linked (GlcNAc...) asparagine). A helical transmembrane segment spans residues 27–49; that stretch reads LFMVFLAIYTITLLANLGLIALI. The Cytoplasmic segment spans residues 50 to 57; sequence SVDFHLQT. A helical transmembrane segment spans residues 58-79; it reads PMYIFLQNLSFTDAAYSTVITP. Residues 80–100 lie on the Extracellular side of the membrane; the sequence is KMLATFLEERRTISYVGCILQ. Cys97 and Cys179 form a disulfide bridge. The helical transmembrane segment at 101–120 threads the bilayer; that stretch reads YFSFVLLTSSECLLLAVMAY. Over 121–139 the chain is Cytoplasmic; that stretch reads DRYVAICKPLLYPAIMTKA. Residues 140 to 164 form a helical membrane-spanning segment; that stretch reads VCWRLVEGLYSLAFLNSLVHTSGLL. The Extracellular portion of the chain corresponds to 165–205; that stretch reads KLSFCSSNVVNHFFCDNSPLFQISSSSTTLNELLVFIFGSW. A helical transmembrane segment spans residues 206 to 226; the sequence is FAMSSIITTPISYVFIILTVV. Topologically, residues 227-239 are cytoplasmic; the sequence is RIRSKDGKYKAFS. Residues 240-260 traverse the membrane as a helical segment; that stretch reads TCTSHLMAVSLFHGTVIFMYL. Residues 261-271 are Extracellular-facing; that stretch reads RPVKLFSLDTD. Residues 272-292 form a helical membrane-spanning segment; the sequence is KIASLFYTVVIPMLNPLIYSW. Residues 293-312 are Cytoplasmic-facing; sequence RNKEVKDALRRVIATNVWIH.

This sequence belongs to the G-protein coupled receptor 1 family.

The protein localises to the cell membrane. In terms of biological role, odorant receptor. This is Olfactory receptor-like protein COR5 (COR5) from Gallus gallus (Chicken).